Reading from the N-terminus, the 560-residue chain is Membrane protein insertase YidC (560 aa).

6 consecutive transmembrane segments (helical) span residues 5-25, 334-354, 357-377, 431-451, 476-496, and 522-542; these read IINL…WQYF, AIDF…MNFF, YVGN…LLMF, LPIL…YVTI, LFGL…WPIL, and FMPL…LIYW.

Belongs to the OXA1/ALB3/YidC family. Type 1 subfamily. As to quaternary structure, interacts with the Sec translocase complex via SecD. Specifically interacts with transmembrane segments of nascent integral membrane proteins during membrane integration.

It localises to the cell inner membrane. In terms of biological role, required for the insertion and/or proper folding and/or complex formation of integral membrane proteins into the membrane. Involved in integration of membrane proteins that insert both dependently and independently of the Sec translocase complex, as well as at least some lipoproteins. Aids folding of multispanning membrane proteins. The sequence is that of Membrane protein insertase YidC from Rickettsia conorii (strain ATCC VR-613 / Malish 7).